A 146-amino-acid chain; its full sequence is COP9 signalosome complex subunit 9 (146 aa).

The region spanning 1–107 is the PCI domain; sequence MDSYKTQWLT…SVAREVKVLQ (107 aa).

Component of a COP9 signalosome-like (CSN) complex.

The protein localises to the cytoplasm. It is found in the nucleus. Component of the COP9 signalosome (CSN) complex that acts as a regulator of the ubiquitin (Ubl) conjugation pathway by mediating the deneddylation of the cullin subunit of SCF-type E3 ubiquitin-protein ligase complexes. The CSN complex is involved in the regulation of the mating pheromone response. In Candida glabrata (strain ATCC 2001 / BCRC 20586 / JCM 3761 / NBRC 0622 / NRRL Y-65 / CBS 138) (Yeast), this protein is COP9 signalosome complex subunit 9 (CSN9).